The chain runs to 757 residues: MQFSGEGLFFHSPFNSPKKHMFSSSKGLFRGHPCPSIAAGQFCRLLCCPFDHPERVKRESENGSDSAEMVKRRKLEVGQGVARVAGDSSGGKLELPGARQALNQRDRPEIEGVGASPKTEGGRAEGAEKKEFASSQSSQKEQQETPHASATPQASVSPQTSAPPQHVSSSVSEDVLKQGKNGITSKSEKSSVKQPGSRDIYQPSSSREPPVSSIDTRTSSSPKSALEAVMTTSASPSQSRDGSRNTSASPSSSRDAEHLMPTTIFPCPATVPQRIAYLKAIHSALTDKRKLKFPKRAAILEELAAAKRSAGNYMVYTNECRVLVKSIKDGSWRGGKAGGTKTDSKTSGHITSSISNQLDMLASKTKPLLAQNGYPVNPDPLKSGLPSNIGIQHCDRCDKAFDVPKVDNYGSCKYHWARARMGGNSTMPEKFYPCCNQPVGMSEGCEEAPRHVYKLHDLNDLAFVIPFRTVSTSESLDTSTSTSTSTSATTSAPSAKSTKTASRPASTPTKSLTSSLDLEKSRQPFNKARRPRTIFNGPAVNQREPDITLETMKRGIGESRGQADSQERSSEPRERSARVREQPSGSCDQAGSLQTSVVAVDCEMLYTSLGMELCRVTCIDYHGKKTLDRVVRPTGRILDYNTRFSGISDINEPIITESGEKGDSISFEEAHRLILKLINKQTILVGHGLENDLIAMRLIHDRIIDTSILYPDFNPRYKTALKTLALKYLKRTIQTGEHDSMEDALAALDVVKCHLKG.

Disordered regions lie at residues 56 to 259 (VKRE…AEHL) and 474 to 590 (ESLD…CDQA). Over residues 120 to 132 (EGGRAEGAEKKEF) the composition is skewed to basic and acidic residues. 3 stretches are compositionally biased toward polar residues: residues 145–172 (TPHA…SSVS), 202–223 (QPSS…SSPK), and 230–240 (MTTSASPSQSR). Composition is skewed to low complexity over residues 244–253 (RNTSASPSSS) and 474–502 (ESLD…KTAS). The span at 503-516 (RPASTPTKSLTSSL) shows a compositional bias: polar residues. Composition is skewed to basic and acidic residues over residues 543-557 (REPD…RGIG) and 565-581 (SQER…RVRE). The 155-residue stretch at 597 to 751 (VVAVDCEMLY…EDALAALDVV (155 aa)) folds into the Exonuclease domain.

This sequence belongs to the REXO1/REXO3 family.

It is found in the cytoplasm. It localises to the nucleus. Functionally, 3' to 5' exoribonuclease required for proper 3' end maturation of MRP RNA and of the U5L snRNA. The protein is RNA exonuclease 3 (REX3) of Yarrowia lipolytica (strain CLIB 122 / E 150) (Yeast).